Here is a 257-residue protein sequence, read N- to C-terminus: Imidazole glycerol phosphate synthase subunit HisF (257 aa).

Active-site residues include aspartate 11 and aspartate 130.

The protein belongs to the HisA/HisF family. Heterodimer of HisH and HisF.

The protein resides in the cytoplasm. The enzyme catalyses 5-[(5-phospho-1-deoxy-D-ribulos-1-ylimino)methylamino]-1-(5-phospho-beta-D-ribosyl)imidazole-4-carboxamide + L-glutamine = D-erythro-1-(imidazol-4-yl)glycerol 3-phosphate + 5-amino-1-(5-phospho-beta-D-ribosyl)imidazole-4-carboxamide + L-glutamate + H(+). Its pathway is amino-acid biosynthesis; L-histidine biosynthesis; L-histidine from 5-phospho-alpha-D-ribose 1-diphosphate: step 5/9. In terms of biological role, IGPS catalyzes the conversion of PRFAR and glutamine to IGP, AICAR and glutamate. The HisF subunit catalyzes the cyclization activity that produces IGP and AICAR from PRFAR using the ammonia provided by the HisH subunit. This chain is Imidazole glycerol phosphate synthase subunit HisF, found in Shewanella sediminis (strain HAW-EB3).